A 99-amino-acid polypeptide reads, in one-letter code: Class II hydrophobin 3 (99 aa).

Residues 1-18 (MRIDILATAALLAQLASA) form the signal peptide. Intrachain disulfides connect Cys31-Cys79, Cys40-Cys70, and Cys41-Cys53.

The protein belongs to the cerato-ulmin hydrophobin family. Homodimer. Homodimers further self-assemble to form highly ordered films at water-air interfaces through intermolecular interactions.

The protein resides in the secreted. The protein localises to the cell wall. Aerial growth, conidiation, and dispersal of filamentous fungi in the environment rely upon a capability of their secreting small amphipathic proteins called hydrophobins (HPBs) with low sequence identity. Class I can self-assemble into an outermost layer of rodlet bundles on aerial cell surfaces, conferring cellular hydrophobicity that supports fungal growth, development and dispersal; whereas Class II form highly ordered films at water-air interfaces through intermolecular interactions but contribute nothing to the rodlet structure. Hyd3 is a class II hydrophobin required for barley root colonization. Hyd1 and Hyd3 are jointly required for conidial hydrophobicity and dispersal, but seem not to be involved in mycelia hydrophobicity. Inhibits conidial germination in environments not suitable for mycelial growth. Plays probably a role in intraspecific signaling or hyphal fusion. The chain is Class II hydrophobin 3 from Bionectria ochroleuca (Gliocladium roseum).